The chain runs to 145 residues: Fluoride-specific ion channel FluC 2 (145 aa).

4 helical membrane passes run 16–36 (MLLV…LSAA), 42–62 (VISV…GWLL), 80–100 (LFAG…AVDT), and 113–133 (ILYA…GIAL). Na(+) contacts are provided by G88 and T91.

It belongs to the fluoride channel Fluc/FEX (TC 1.A.43) family.

It localises to the cell membrane. The catalysed reaction is fluoride(in) = fluoride(out). With respect to regulation, na(+) is not transported, but it plays an essential structural role and its presence is essential for fluoride channel function. In terms of biological role, fluoride-specific ion channel. Important for reducing fluoride concentration in the cell, thus reducing its toxicity. This Leifsonia xyli subsp. xyli (strain CTCB07) protein is Fluoride-specific ion channel FluC 2.